The primary structure comprises 396 residues: Phosphoglycerate kinase (396 aa).

Substrate is bound by residues 21–23 (DLN), Arg36, 59–62 (HFGR), Arg118, and Arg151. ATP-binding positions include Lys201, Glu323, and 353–356 (GGDT).

This sequence belongs to the phosphoglycerate kinase family. Monomer.

The protein localises to the cytoplasm. It catalyses the reaction (2R)-3-phosphoglycerate + ATP = (2R)-3-phospho-glyceroyl phosphate + ADP. It functions in the pathway carbohydrate degradation; glycolysis; pyruvate from D-glyceraldehyde 3-phosphate: step 2/5. The polypeptide is Phosphoglycerate kinase (Brucella abortus biovar 1 (strain 9-941)).